Consider the following 158-residue polypeptide: SsrA-binding protein (158 aa).

A compositionally biased stretch (basic and acidic residues) spans K133–Q147. A disordered region spans residues K133–E158.

It belongs to the SmpB family.

It is found in the cytoplasm. In terms of biological role, required for rescue of stalled ribosomes mediated by trans-translation. Binds to transfer-messenger RNA (tmRNA), required for stable association of tmRNA with ribosomes. tmRNA and SmpB together mimic tRNA shape, replacing the anticodon stem-loop with SmpB. tmRNA is encoded by the ssrA gene; the 2 termini fold to resemble tRNA(Ala) and it encodes a 'tag peptide', a short internal open reading frame. During trans-translation Ala-aminoacylated tmRNA acts like a tRNA, entering the A-site of stalled ribosomes, displacing the stalled mRNA. The ribosome then switches to translate the ORF on the tmRNA; the nascent peptide is terminated with the 'tag peptide' encoded by the tmRNA and targeted for degradation. The ribosome is freed to recommence translation, which seems to be the essential function of trans-translation. This is SsrA-binding protein from Leifsonia xyli subsp. xyli (strain CTCB07).